The primary structure comprises 490 residues: UDP-glycosyltransferase 86A1 (490 aa).

Residues Ser294, 352–354, 369–377, and 391–394 contribute to the UDP-alpha-D-glucose site; these read CCQ, HCGWNSILE, and LTDQ.

It belongs to the UDP-glycosyltransferase family.

The protein is UDP-glycosyltransferase 86A1 (UGT86A1) of Arabidopsis thaliana (Mouse-ear cress).